The following is a 131-amino-acid chain: MSDIPGDLKFLKSHEWVRIEDNNRAIVGVSDHAQNLLGDLVYVELPNIGDHLDAGATAAVIESVKAASDIYSPVTGKVIEVNTTLSDKPETINEDPYGEGWIMVIEMQAPEEISNLLSPDDYTEVLESDEH.

The Lipoyl-binding domain occupies 24–106 (RAIVGVSDHA…YGEGWIMVIE (83 aa)). At Lys-65 the chain carries N6-lipoyllysine.

This sequence belongs to the GcvH family. In terms of assembly, the glycine cleavage system is composed of four proteins: P, T, L and H. The cofactor is (R)-lipoate.

In terms of biological role, the glycine cleavage system catalyzes the degradation of glycine. The H protein shuttles the methylamine group of glycine from the P protein to the T protein. The polypeptide is Glycine cleavage system H protein (Xylella fastidiosa (strain Temecula1 / ATCC 700964)).